We begin with the raw amino-acid sequence, 299 residues long: Protein sprouty homolog 4 (299 aa).

N-acetylmethionine is present on Met1. Disordered stretches follow at residues 55–79 and 92–126; these read NPSL…PTPA and FSGR…QASP. A compositionally biased stretch (low complexity) spans 92 to 107; the sequence is FSGRPSSVSSSSSTSS. Ser125 carries the post-translational modification Phosphoserine. The region spanning 166 to 273 is the SPR domain; the sequence is KCKECASPRT…GYDRLRRPGC (108 aa). A required for interaction with TESK1. Required for colocalization with TESK1 at vesicular spots in the cytoplasm and inhibition of TESK1 kinase activity, resulting in inhibition of cell spreading region spans residues 181-299; it reads VCNQECLCSA…AKTSRPDKPF (119 aa).

The protein belongs to the sprouty family. Interacts (via C-terminus) with TESK1 (via both C- and N-termini); the interaction inhibits TESK1 kinase activity. Interacts with RAF1. Interacts with CAV1 (via C-terminus).

It localises to the cytoplasm. The protein resides in the cell projection. The protein localises to the ruffle membrane. Functionally, suppresses the insulin receptor and EGFR-transduced MAPK signaling pathway, but does not inhibit MAPK activation by a constitutively active mutant Ras. Probably impairs the formation of GTP-Ras. Inhibits Ras-independent, but not Ras-dependent, activation of RAF1. Represses integrin-mediated cell spreading via inhibition of TESK1-mediated phosphorylation of cofilin. In Homo sapiens (Human), this protein is Protein sprouty homolog 4 (SPRY4).